The sequence spans 1169 residues: Pesticidal crystal protein Cry8Ba (1169 aa).

The tract at residues 1-26 is disordered; it reads MSPNNQNEYEIIDATPSTSVSNDSNR. A compositionally biased stretch (polar residues) spans 15–25; it reads TPSTSVSNDSN.

The protein belongs to the delta endotoxin family.

Promotes colloidosmotic lysis by binding to the midgut epithelial cells of insects. Active on various scarabaeid beetles. The sequence is that of Pesticidal crystal protein Cry8Ba (cry8Ba) from Bacillus thuringiensis serovar kumamotoensis.